A 495-amino-acid polypeptide reads, in one-letter code: Phage-like element PBSX protein XkdE (495 aa).

It belongs to the phage portal family. PBSX subfamily.

The sequence is that of Phage-like element PBSX protein XkdE (xkdE) from Bacillus subtilis (strain 168).